Here is a 781-residue protein sequence, read N- to C-terminus: MAP7 domain-containing protein 2 (781 aa).

Gly residues predominate over residues 1 to 32; the sequence is MERSGGNGGGGGGGGGGGGGYGGSGGGGGGAG. Disordered regions lie at residues 1 to 37, 50 to 87, 120 to 567, and 597 to 628; these read MERS…PSEG, AEAA…REER, LEEQ…AAKQ, and TRKS…ANKA. Composition is skewed to basic and acidic residues over residues 71-87 and 120-158; these read LKSD…REER and LEEQ…RSLE. A coiled-coil region spans residues 73–168; it reads SDERQRLAKE…RTQQLELKKK (96 aa). A compositionally biased stretch (low complexity) spans 192 to 210; that stretch reads LTLATSTPPLDTGTTTAAA. Polar residues-rich tracts occupy residues 211 to 245 and 257 to 267; these read ESTN…TVAI and LKSSYKSSPTR. Residues 318 to 328 are compositionally biased toward basic and acidic residues; that stretch reads RRCEPPEDISK. The segment covering 329-348 has biased composition (polar residues); sequence RLSSPVKSKITSKTYPQSPK. Basic and acidic residues-rich tracts occupy residues 370–387, 397–436, 453–567, and 597–613; these read ETPK…EKEG, PREE…EHSA, LAEK…AAKQ, and TRKS…DPKV.

It belongs to the MAP7 family. In terms of assembly, interacts (via N-terminus) with microtubules; facilitates microtubule stabilization. Interacts with kinesin-1 family members, KIF5A, KIF5B and KIF5C. Expressed predominantly in the glomerular layer of the olfactory bulb and Sertoli cells of the testis.

The protein localises to the cytoplasm. Its subcellular location is the cytoskeleton. The protein resides in the microtubule organizing center. It is found in the centrosome. It localises to the midbody. The protein localises to the cell projection. Its subcellular location is the neuron projection. The protein resides in the axon. Microtubule-stabilizing protein involved in the control of cell motility and neurite outgrowth. Acts as a critical cofactor for kinesin transport; in the proximal axon regulates kinesin-1 family members, KIF5A, KIF5B and KIF5C recruitment to microtubules and contributes to kinesin-1-mediated transport in the axons. In Mus musculus (Mouse), this protein is MAP7 domain-containing protein 2 (Map7d2).